A 146-amino-acid chain; its full sequence is Large ribosomal subunit protein uL15 (146 aa).

Residues 1–13 are compositionally biased toward basic and acidic residues; it reads MKLHELKAAEGSR. A disordered region spans residues 1–51; the sequence is MKLHELKAAEGSRKVRNRVGRGTSSGNGKTSGRGQKGQKARSGGGVRLGFE. 2 stretches are compositionally biased toward gly residues: residues 23–35 and 42–51; these read TSSG…GRGQ and SGGGVRLGFE.

It belongs to the universal ribosomal protein uL15 family. As to quaternary structure, part of the 50S ribosomal subunit.

In terms of biological role, binds to the 23S rRNA. The sequence is that of Large ribosomal subunit protein uL15 from Streptococcus pyogenes serotype M1.